The chain runs to 120 residues: Large ribosomal subunit protein uL22 (120 aa).

The protein belongs to the universal ribosomal protein uL22 family. As to quaternary structure, part of the 50S ribosomal subunit.

Functionally, this protein binds specifically to 23S rRNA; its binding is stimulated by other ribosomal proteins, e.g. L4, L17, and L20. It is important during the early stages of 50S assembly. It makes multiple contacts with different domains of the 23S rRNA in the assembled 50S subunit and ribosome. The globular domain of the protein is located near the polypeptide exit tunnel on the outside of the subunit, while an extended beta-hairpin is found that lines the wall of the exit tunnel in the center of the 70S ribosome. The protein is Large ribosomal subunit protein uL22 of Rippkaea orientalis (strain PCC 8801 / RF-1) (Cyanothece sp. (strain PCC 8801)).